Consider the following 108-residue polypeptide: Cytochrome c (108 aa).

The heme c site is built by Cys19, Cys22, His23, and Met85.

It belongs to the cytochrome c family. Post-translationally, binds 1 heme c group covalently per subunit.

The protein resides in the mitochondrion intermembrane space. Its function is as follows. Electron carrier protein. The oxidized form of the cytochrome c heme group can accept an electron from the heme group of the cytochrome c1 subunit of cytochrome reductase. Cytochrome c then transfers this electron to the cytochrome oxidase complex, the final protein carrier in the mitochondrial electron-transport chain. This is Cytochrome c from Cochliobolus lunatus (Filamentous fungus).